Reading from the N-terminus, the 261-residue chain is Zaragozic acid A biosynthesis cluster protein 8 (261 aa).

The segment covering 242-254 has biased composition (polar residues); that stretch reads GTRSHTPAATQRR. Positions 242-261 are disordered; the sequence is GTRSHTPAATQRRGQGRGCG.

Its pathway is secondary metabolite biosynthesis. Functionally, part of the gene cluster that mediates the biosynthesis of squalestatin S1 (SQS1, also known as zaragozic acid A), a heavily oxidized fungal polyketide that offers potent cholesterol lowering activity by targeting squalene synthase (SS). SQS1 is composed of a 2,8-dioxobicyclic[3.2.1]octane-3,4,5-tricarboxyclic acid core that is connected to two lipophilic polyketide arms. These initial steps feature the priming of an unusual benzoic acid starter unit onto the highly reducing polyketide synthase clz14, followed by oxaloacetate extension and product release to generate a tricarboxylic acid containing product. The phenylalanine ammonia lyase (PAL) clz10 and the acyl-CoA ligase clz12 are involved in transforming phenylalanine into benzoyl-CoA. The citrate synthase-like protein clz17 is involved in connecting the C-alpha-carbons of the hexaketide chain and oxaloacetate to afford the tricarboxylic acid unit. The potential hydrolytic enzymes, clz11 and clz13, are in close proximity to pks2 and may participate in product release. On the other side, the tetraketide arm is synthesized by a the squalestatin tetraketide synthase clz2 and enzymatically esterified to the core in the last biosynthetic step, by the acetyltransferase clz6. The biosynthesis of the tetraketide must involve 3 rounds of chain extension. After the first and second rounds methyl-transfer occurs, and in all rounds of extension the ketoreductase and dehydratase are active. The enoyl reductase and C-MeT of clz2 are not active in the final round of extension. The acetyltransferase clz6 appears to have a broad substrate selectivity for its acyl CoA substrate, allowing the in vitro synthesis of novel squalestatins. The biosynthesis of SQS1 requires several oxidative steps likely performed by oxidoreductases clz3, clz15 and clz16. Finally, in support of the identification of the cluster as being responsible for SQS1 production, the cluster contains a gene encoding a putative squalene synthase (SS) clz20, suggesting a likely mechanism for self-resistance. The sequence is that of Zaragozic acid A biosynthesis cluster protein 8 from Cochliobolus lunatus (Filamentous fungus).